Reading from the N-terminus, the 245-residue chain is Acetylglutamate kinase (245 aa).

Substrate-binding positions include Gly41–Gly42, Arg63, and Asn156.

Belongs to the acetylglutamate kinase family. ArgB subfamily.

The protein resides in the cytoplasm. The catalysed reaction is N-acetyl-L-glutamate + ATP = N-acetyl-L-glutamyl 5-phosphate + ADP. The protein operates within amino-acid biosynthesis; L-arginine biosynthesis; N(2)-acetyl-L-ornithine from L-glutamate: step 2/4. In terms of biological role, catalyzes the ATP-dependent phosphorylation of N-acetyl-L-glutamate. The sequence is that of Acetylglutamate kinase from Streptococcus mutans serotype c (strain ATCC 700610 / UA159).